Consider the following 423-residue polypeptide: Histidine--tRNA ligase (423 aa).

This sequence belongs to the class-II aminoacyl-tRNA synthetase family. In terms of assembly, homodimer.

It is found in the cytoplasm. The catalysed reaction is tRNA(His) + L-histidine + ATP = L-histidyl-tRNA(His) + AMP + diphosphate + H(+). The sequence is that of Histidine--tRNA ligase from Actinobacillus pleuropneumoniae serotype 7 (strain AP76).